Here is a 2286-residue protein sequence, read N- to C-terminus: DNA polymerase epsilon catalytic subunit A (2286 aa).

The disordered stretch occupies residues 1 to 30 (MSLRSGGRRRADPGADGEASRDDGATSSVS). The segment covering 9 to 24 (RRADPGADGEASRDDG) has biased composition (basic and acidic residues). A phosphoserine mark is found at serine 1184, serine 1297, serine 1317, and serine 1940. The tract at residues 1939–1969 (DSQKAGGAEDEQENEDDEEERDGEEEEEAEE) is disordered. Residues 1946–1969 (AEDEQENEDDEEERDGEEEEEAEE) show a composition bias toward acidic residues. The Zn(2+) site is built by cysteine 2158, cysteine 2161, cysteine 2187, and cysteine 2190. The segment at 2158-2190 (CRSCNFCRDLDLCKDSSFSEDGAVLPQWLCSNC) adopts a CysA-type zinc-finger fold. Residues cysteine 2221, cysteine 2224, cysteine 2236, and cysteine 2238 each contribute to the [4Fe-4S] cluster site. The CysB motif motif lies at 2221–2238 (CLKCRGVKETSMPVYCSC).

This sequence belongs to the DNA polymerase type-B family. In terms of assembly, component of the DNA polymerase epsilon complex consisting of four subunits: the catalytic subunit POLE and the accessory subunits POLE2, POLE3 and POLE4. Interacts with RAD17 and TOPBP1.

The protein resides in the nucleus. The enzyme catalyses DNA(n) + a 2'-deoxyribonucleoside 5'-triphosphate = DNA(n+1) + diphosphate. Its function is as follows. Catalytic component of the DNA polymerase epsilon complex. Participates in chromosomal DNA replication. Required during synthesis of the leading DNA strands at the replication fork, binds at/or near replication origins and moves along DNA with the replication fork. Has 3'-5' proofreading exonuclease activity that corrects errors arising during DNA replication. Involved in DNA synthesis during DNA repair. Along with DNA polymerase POLD1 and DNA polymerase POLK, has a role in excision repair (NER) synthesis following UV irradiation. This chain is DNA polymerase epsilon catalytic subunit A, found in Homo sapiens (Human).